Reading from the N-terminus, the 380-residue chain is Probable protein phosphatase 2C 34 (380 aa).

Residues 32–335 form the PPM-type phosphatase domain; it reads AAGEFSMAAA…DDISVIVVYL (304 aa). Mn(2+)-binding residues include D66, G67, D267, and D326.

The protein belongs to the PP2C family. Mg(2+) serves as cofactor. It depends on Mn(2+) as a cofactor.

The enzyme catalyses O-phospho-L-seryl-[protein] + H2O = L-seryl-[protein] + phosphate. It catalyses the reaction O-phospho-L-threonyl-[protein] + H2O = L-threonyl-[protein] + phosphate. In Oryza sativa subsp. indica (Rice), this protein is Probable protein phosphatase 2C 34 (BIPP2C2).